Reading from the N-terminus, the 939-residue chain is Valine--tRNA ligase (939 aa).

The 'HIGH' region signature appears at 47–57; the sequence is PNVTGILHMGH. Residues 563 to 567 carry the 'KMSKS' region motif; sequence KLSKS. Lysine 566 contributes to the ATP binding site. Residues 873-939 adopt a coiled-coil conformation; that stretch reads AEHLAKEHAR…QSILDKIASL (67 aa).

Belongs to the class-I aminoacyl-tRNA synthetase family. ValS type 1 subfamily. In terms of assembly, monomer.

Its subcellular location is the cytoplasm. It catalyses the reaction tRNA(Val) + L-valine + ATP = L-valyl-tRNA(Val) + AMP + diphosphate. Functionally, catalyzes the attachment of valine to tRNA(Val). As ValRS can inadvertently accommodate and process structurally similar amino acids such as threonine, to avoid such errors, it has a 'posttransfer' editing activity that hydrolyzes mischarged Thr-tRNA(Val) in a tRNA-dependent manner. The chain is Valine--tRNA ligase from Chlamydia muridarum (strain MoPn / Nigg).